A 501-amino-acid chain; its full sequence is Lysine--tRNA ligase (501 aa).

Mg(2+) contacts are provided by Glu404 and Glu411.

Belongs to the class-II aminoacyl-tRNA synthetase family. As to quaternary structure, homodimer. Mg(2+) serves as cofactor.

Its subcellular location is the cytoplasm. It carries out the reaction tRNA(Lys) + L-lysine + ATP = L-lysyl-tRNA(Lys) + AMP + diphosphate. The polypeptide is Lysine--tRNA ligase (Campylobacter jejuni subsp. doylei (strain ATCC BAA-1458 / RM4099 / 269.97)).